The primary structure comprises 1031 residues: MMS19 nucleotide excision repair protein homolog (1031 aa).

Residue Ala-2 is modified to N-acetylalanine. HEAT repeat units lie at residues 867–905 (QRFF…RLPK), 909–947 (LPEL…EAPQ), 950–988 (SLHV…LPTS), and 991–1029 (LPYK…LGSP). Ser-1028 carries the phosphoserine modification.

This sequence belongs to the MET18/MMS19 family. Component of the CIA complex. In the CIA complex, interacts directly with CIAO2B and CIAO3. Component of the MMXD complex, composed of CIAO1, ERCC2, CIAO2B, MMS19 and SLC25A5. Interacts with CIAO2B; the interaction is direct. Interacts with ERCC2/XPD; the interaction is direct. Interacts with ERCC3/XPB and NCOA3/RAC3. Interacts with RTEL1; the interaction mediates the association of RTEL1 with the CIA complex. Interacts with BRIP1. Interacts with KIF4A; the interaction facilitates the transfer of Fe-S clusters to KIF4A to ensure proper localization of KIF4A to the mitotic machinery components. Interacts with CCDC117; the interaction is indirect. Post-translationally, ubiquitinated; undergoes 'Lys-48'-linked polyubiquitination. In terms of tissue distribution, ubiquitously expressed with higher expression in testis.

Its subcellular location is the nucleus. The protein localises to the cytoplasm. It is found in the cytoskeleton. It localises to the spindle. Functionally, key component of the cytosolic iron-sulfur protein assembly (CIA) complex, a multiprotein complex that mediates the incorporation of iron-sulfur cluster into apoproteins specifically involved in DNA metabolism and genomic integrity. In the CIA complex, MMS19 acts as an adapter between early-acting CIA components and a subset of cellular target Fe/S proteins such as ERCC2/XPD, FANCJ and RTEL1, thereby playing a key role in nucleotide excision repair (NER), homologous recombination-mediated double-strand break DNA repair, DNA replication and RNA polymerase II (POL II) transcription. As a CIA complex component and in collaboration with CIAO1 and CIAO2, binds to and facilitates the assembly of most cytosolic-nuclear Fe/S proteins. As part of the mitotic spindle-associated MMXD complex, plays a role in chromosome segregation, probably by facilitating iron-sulfur cluster assembly into ERCC2/XPD. Together with CIAO2, facilitates the transfer of Fe-S clusters to the motor protein KIF4A, which ensures proper localization of KIF4A to mitotic machinery components to promote the progression of mitosis. Indirectly acts as a transcriptional coactivator of estrogen receptor (ER), via its role in iron-sulfur insertion into some component of the TFIIH-machinery. This is MMS19 nucleotide excision repair protein homolog from Mus musculus (Mouse).